Here is a 549-residue protein sequence, read N- to C-terminus: Glucose-6-phosphate isomerase (549 aa).

E353 (proton donor) is an active-site residue. Active-site residues include H384 and K513.

It belongs to the GPI family.

The protein localises to the cytoplasm. It carries out the reaction alpha-D-glucose 6-phosphate = beta-D-fructose 6-phosphate. It functions in the pathway carbohydrate biosynthesis; gluconeogenesis. The protein operates within carbohydrate degradation; glycolysis; D-glyceraldehyde 3-phosphate and glycerone phosphate from D-glucose: step 2/4. Functionally, catalyzes the reversible isomerization of glucose-6-phosphate to fructose-6-phosphate. In Brucella melitensis biotype 2 (strain ATCC 23457), this protein is Glucose-6-phosphate isomerase.